The primary structure comprises 190 residues: MSTRKRRGGAINSRQAQKRTREATSTPEISLEAEPIELVETAGDEIVDLTCESLEPVVVDLTHNDSVVIVDERRRPRRNARRLPQDHADSCVVSSDDEELSRDRDVYVTTHTPRNARDEGATGLRPSGTVSCPICMDGYSEIVQNGRLIVSTECGHVFCSQCLRDSLKNANTCPTCRKKINHKRYHPIYI.

The required for ubiquitination activity stretch occupies residues 1-16 (MSTRKRRGGAINSRQA). The interval 1-29 (MSTRKRRGGAINSRQAQKRTREATSTPEI) is disordered. The interval 4–61 (RKRRGGAINSRQAQKRTREATSTPEISLEAEPIELVETAGDEIVDLTCESLEPVVVDL) is mediates interaction with TRPS1. 4 short sequence motifs (SUMO interaction motif) span residues 36-39 (IELV), 46-49 (IVDL), 57-59 (VVV), and 67-70 (VVIV). 2 positions are modified to phosphoserine: Ser-94 and Ser-95. Zn(2+)-binding residues include Cys-132, Cys-135, Cys-154, His-156, Cys-159, Cys-162, Cys-173, and Cys-176. The RING-type zinc finger occupies 132–177 (CPICMDGYSEIVQNGRLIVSTECGHVFCSQCLRDSLKNANTCPTCR).

In terms of assembly, homodimer (via RING-type zinc finger domain). Interacts with GSC2. Interacts with AR/the androgen receptor and TBP. Interacts with TCF20. Interacts with PATZ1. Interacts with TRPS1; negatively regulates TRPS1 transcriptional repressor activity. Interacts with PML (isoform PML-1, isoform PML-2, isoform PML-3, isoform PML-4, isoform PML-5 and isoform PML-6). Interacts with PRDM1/Blimp-1. In terms of processing, sumoylated; conjugated by one or two SUMO1 moieties. Autoubiquitinated. In terms of tissue distribution, widely expressed at low levels in many tissues; highly expressed in testis.

It localises to the cytoplasm. Its subcellular location is the nucleus. The protein resides in the PML body. The catalysed reaction is S-ubiquitinyl-[E2 ubiquitin-conjugating enzyme]-L-cysteine + [acceptor protein]-L-lysine = [E2 ubiquitin-conjugating enzyme]-L-cysteine + N(6)-ubiquitinyl-[acceptor protein]-L-lysine.. The protein operates within protein modification; protein ubiquitination. E3 ubiquitin-protein ligase which binds polysumoylated chains covalently attached to proteins and mediates 'Lys-6'-, 'Lys-11'-, 'Lys-48'- and 'Lys-63'-linked polyubiquitination of those substrates and their subsequent targeting to the proteasome for degradation. Regulates the degradation of several proteins including PML and the transcriptional activator PEA3. Involved in chromosome alignment and spindle assembly, it regulates the kinetochore CENPH-CENPI-CENPK complex by targeting polysumoylated CENPI to proteasomal degradation. Regulates the cellular responses to hypoxia and heat shock through degradation of respectively EPAS1 and PARP1. Alternatively, it may also bind DNA/nucleosomes and have a more direct role in the regulation of transcription for instance enhancing basal transcription and steroid receptor-mediated transcriptional activation. Catalyzes ubiquitination of sumoylated PARP1 in response to PARP1 trapping to chromatin, leading to PARP1 removal from chromatin by VCP/p97. In Homo sapiens (Human), this protein is E3 ubiquitin-protein ligase RNF4.